The primary structure comprises 121 residues: Small ribosomal subunit protein uS13 (121 aa).

The interval 94–121 (GLPVRGQNTKNNARTRKGPRRTVANKKK) is disordered. Residues 106 to 121 (ARTRKGPRRTVANKKK) are compositionally biased toward basic residues.

The protein belongs to the universal ribosomal protein uS13 family. Part of the 30S ribosomal subunit. Forms a loose heterodimer with protein S19. Forms two bridges to the 50S subunit in the 70S ribosome.

Its function is as follows. Located at the top of the head of the 30S subunit, it contacts several helices of the 16S rRNA. In the 70S ribosome it contacts the 23S rRNA (bridge B1a) and protein L5 of the 50S subunit (bridge B1b), connecting the 2 subunits; these bridges are implicated in subunit movement. Contacts the tRNAs in the A and P-sites. The chain is Small ribosomal subunit protein uS13 from Geobacillus sp. (strain WCH70).